The sequence spans 473 residues: Siroheme synthase (473 aa).

Positions 1 to 206 are precorrin-2 dehydrogenase /sirohydrochlorin ferrochelatase; the sequence is MDYLPIFMKI…GNTGEAEALL (206 aa). NAD(+) contacts are provided by residues 22 to 23 and 43 to 44; these read TV and PK. The uroporphyrinogen-III C-methyltransferase stretch occupies residues 223 to 473; that stretch reads GEVYIIGAGP…KSLLDDRVPA (251 aa). Proline 232 provides a ligand contact to S-adenosyl-L-methionine. Residue aspartate 255 is the Proton acceptor of the active site. Lysine 277 functions as the Proton donor in the catalytic mechanism. S-adenosyl-L-methionine is bound by residues 308–310, isoleucine 313, 338–339, methionine 390, and glycine 419; these read GGD and TA.

It in the N-terminal section; belongs to the precorrin-2 dehydrogenase / sirohydrochlorin ferrochelatase family. This sequence in the C-terminal section; belongs to the precorrin methyltransferase family.

The catalysed reaction is uroporphyrinogen III + 2 S-adenosyl-L-methionine = precorrin-2 + 2 S-adenosyl-L-homocysteine + H(+). The enzyme catalyses precorrin-2 + NAD(+) = sirohydrochlorin + NADH + 2 H(+). It carries out the reaction siroheme + 2 H(+) = sirohydrochlorin + Fe(2+). The protein operates within cofactor biosynthesis; adenosylcobalamin biosynthesis; precorrin-2 from uroporphyrinogen III: step 1/1. It participates in cofactor biosynthesis; adenosylcobalamin biosynthesis; sirohydrochlorin from precorrin-2: step 1/1. It functions in the pathway porphyrin-containing compound metabolism; siroheme biosynthesis; precorrin-2 from uroporphyrinogen III: step 1/1. Its pathway is porphyrin-containing compound metabolism; siroheme biosynthesis; siroheme from sirohydrochlorin: step 1/1. The protein operates within porphyrin-containing compound metabolism; siroheme biosynthesis; sirohydrochlorin from precorrin-2: step 1/1. Functionally, multifunctional enzyme that catalyzes the SAM-dependent methylations of uroporphyrinogen III at position C-2 and C-7 to form precorrin-2 via precorrin-1. Then it catalyzes the NAD-dependent ring dehydrogenation of precorrin-2 to yield sirohydrochlorin. Finally, it catalyzes the ferrochelation of sirohydrochlorin to yield siroheme. This Hydrogenovibrio crunogenus (strain DSM 25203 / XCL-2) (Thiomicrospira crunogena) protein is Siroheme synthase.